Here is a 1624-residue protein sequence, read N- to C-terminus: Reverse gyrase (1624 aa).

An RG N-terminal-type zinc finger spans residues 1–42 (MKAIYRGMCPNCRGAITDERLSNKNPCEGCLSEPILSEDYNE). Zn(2+) is bound by residues Cys-9, Cys-12, Cys-27, and Cys-30. ATP contacts are provided by residues Gln-89 and 106-113 (APTGMGKS). The 164-residue stretch at 93-256 (VKRIIRGKSF…KLKKQLAKLL (164 aa)) folds into the Helicase ATP-binding domain. Positions 213-216 (DDVD) match the DEAD box motif. The segment at 636–1624 (DLVKSALMIV…LYEEIKRYVR (989 aa)) is topoisomerase I. Residues 640–803 (SALMIVESPN…NIKRIEFHEV (164 aa)) form the Toprim domain. Glu-646 is a binding site for Mg(2+). Residues 720-749 (IKRCRDCGHQFVDWEQKGVCPRCGSRNVHD) form an RG C-terminal-type zinc finger. Positions 723, 726, 739, and 742 each coordinate Zn(2+). Asp-772 provides a ligand contact to Mg(2+). In terms of domain architecture, Topo IA-type catalytic spans 819–1623 (NEDRVNAQLV…ELYEEIKRYV (805 aa)). Residues 1107-1222 (IFGVILGKGT…LSVYLYQIGI (116 aa)) enclose the DOD-type homing endonuclease domain. Catalysis depends on Tyr-1366, which acts as the O-(5'-phospho-DNA)-tyrosine intermediate.

It in the N-terminal section; belongs to the DEAD box helicase family. DDVD subfamily. In the C-terminal section; belongs to the type IA topoisomerase family. Monomer. Zn(2+) serves as cofactor. It depends on Mg(2+) as a cofactor. This protein undergoes a protein self splicing that involves a post-translational excision of the intervening region (intein) followed by peptide ligation.

It localises to the cytoplasm. The catalysed reaction is ATP + H2O = ADP + phosphate + H(+). Its function is as follows. Modifies the topological state of DNA by introducing positive supercoils in an ATP-dependent process, increasing the linking number in steps of +1. Binds to single-stranded DNA, transiently cleaves and then rejoins the ends, introducing a positive supercoil in the process. The scissile phosphodiester is attacked by the catalytic tyrosine of the enzyme, resulting in the formation of a DNA-(5'-phosphotyrosyl)-enzyme intermediate. Probably involved in rewinding DNA strands in regions of the chromosome that have opened up to allow replication, transcription, DNA repair and/or for DNA protection. This Pyrococcus horikoshii (strain ATCC 700860 / DSM 12428 / JCM 9974 / NBRC 100139 / OT-3) protein is Reverse gyrase.